Here is a 268-residue protein sequence, read N- to C-terminus: Putative sgc region protein SgcQ (268 aa).

It belongs to the BtpA family.

This chain is Putative sgc region protein SgcQ (sgcQ), found in Escherichia coli (strain K12).